The sequence spans 148 residues: Large ribosomal subunit protein bL9 (148 aa).

This sequence belongs to the bacterial ribosomal protein bL9 family.

Its function is as follows. Binds to the 23S rRNA. The sequence is that of Large ribosomal subunit protein bL9 from Heliobacterium modesticaldum (strain ATCC 51547 / Ice1).